We begin with the raw amino-acid sequence, 413 residues long: Tyrosine--tRNA ligase 2 (413 aa).

Positions 58–67 (PSAPDVHLGH) match the 'HIGH' region motif. Tandem repeats lie at residues 89–94 (GDFTGK) and 96–101 (GDPTGK). Residues 89-101 (GDFTGKIGDPTGK) are 2 X 6 AA tandem repeats. A 'KMSKS' region motif is present at residues 242–246 (KMSKS). Lys-245 contacts ATP. The S4 RNA-binding domain maps to 353–413 (IAMIDLLVKL…VGKRKFLKLQ (61 aa)).

Belongs to the class-I aminoacyl-tRNA synthetase family. TyrS type 2 subfamily. As to quaternary structure, homodimer.

Its subcellular location is the cytoplasm. The catalysed reaction is tRNA(Tyr) + L-tyrosine + ATP = L-tyrosyl-tRNA(Tyr) + AMP + diphosphate + H(+). Catalyzes the attachment of tyrosine to tRNA(Tyr) in a two-step reaction: tyrosine is first activated by ATP to form Tyr-AMP and then transferred to the acceptor end of tRNA(Tyr). The chain is Tyrosine--tRNA ligase 2 from Bacillus subtilis (strain 168).